The sequence spans 870 residues: DNA-directed RNA polymerase subunit Rpo1N (870 aa).

Cysteine 60, cysteine 63, cysteine 70, histidine 73, cysteine 100, cysteine 103, cysteine 146, and cysteine 149 together coordinate Zn(2+). Residues aspartate 451, aspartate 453, and aspartate 455 each coordinate Mg(2+).

Belongs to the RNA polymerase beta' chain family. As to quaternary structure, part of the RNA polymerase complex. Mg(2+) is required as a cofactor. Zn(2+) serves as cofactor.

It is found in the cytoplasm. It carries out the reaction RNA(n) + a ribonucleoside 5'-triphosphate = RNA(n+1) + diphosphate. DNA-dependent RNA polymerase (RNAP) catalyzes the transcription of DNA into RNA using the four ribonucleoside triphosphates as substrates. Forms the clamp head domain. The protein is DNA-directed RNA polymerase subunit Rpo1N of Methanothermobacter thermautotrophicus (strain ATCC 29096 / DSM 1053 / JCM 10044 / NBRC 100330 / Delta H) (Methanobacterium thermoautotrophicum).